We begin with the raw amino-acid sequence, 208 residues long: Small ribosomal subunit protein uS5 (208 aa).

The segment at methionine 1–arginine 38 is disordered. The S5 DRBM domain maps to tyrosine 41 to valine 104.

It belongs to the universal ribosomal protein uS5 family. As to quaternary structure, part of the 30S ribosomal subunit. Contacts proteins S4 and S8.

Functionally, with S4 and S12 plays an important role in translational accuracy. Located at the back of the 30S subunit body where it stabilizes the conformation of the head with respect to the body. The protein is Small ribosomal subunit protein uS5 of Corynebacterium diphtheriae (strain ATCC 700971 / NCTC 13129 / Biotype gravis).